The sequence spans 98 residues: uncharacterized protein (98 aa).

An N-terminal signal peptide occupies residues 1–19 (MTERRRALSLAAVVDSINL). The disordered stretch occupies residues 40–98 (PPGGSFSGIKRESRRKRPSRNEIYGGGVLEQEVRMRRWSKTASPPVSLHHRPLGPARKP). Residues 87 to 98 (LHHRPLGPARKP) are compositionally biased toward basic residues.

This is an uncharacterized protein from Homo sapiens (Human).